The chain runs to 577 residues: Proline--tRNA ligase (577 aa).

Belongs to the class-II aminoacyl-tRNA synthetase family. ProS type 1 subfamily. In terms of assembly, homodimer.

It is found in the cytoplasm. It catalyses the reaction tRNA(Pro) + L-proline + ATP = L-prolyl-tRNA(Pro) + AMP + diphosphate. Functionally, catalyzes the attachment of proline to tRNA(Pro) in a two-step reaction: proline is first activated by ATP to form Pro-AMP and then transferred to the acceptor end of tRNA(Pro). As ProRS can inadvertently accommodate and process non-cognate amino acids such as alanine and cysteine, to avoid such errors it has two additional distinct editing activities against alanine. One activity is designated as 'pretransfer' editing and involves the tRNA(Pro)-independent hydrolysis of activated Ala-AMP. The other activity is designated 'posttransfer' editing and involves deacylation of mischarged Ala-tRNA(Pro). The misacylated Cys-tRNA(Pro) is not edited by ProRS. The polypeptide is Proline--tRNA ligase (Helicobacter pylori (strain ATCC 700392 / 26695) (Campylobacter pylori)).